A 131-amino-acid chain; its full sequence is Arsenate reductase 1 (131 aa).

Residues C10, C82, and C89 each act as nucleophile in the active site. 2 disulfides stabilise this stretch: C10-C82 and C82-C89.

The protein belongs to the low molecular weight phosphotyrosine protein phosphatase family. Thioredoxin-coupled ArsC subfamily.

The protein resides in the cytoplasm. The enzyme catalyses arsenate + [thioredoxin]-dithiol + H(+) = arsenite + [thioredoxin]-disulfide + H2O. Functionally, catalyzes the reduction of arsenate [As(V)] to arsenite [As(III)]. The sequence is that of Arsenate reductase 1 from Staphylococcus saprophyticus subsp. saprophyticus (strain ATCC 15305 / DSM 20229 / NCIMB 8711 / NCTC 7292 / S-41).